The following is a 91-amino-acid chain: Small ribosomal subunit protein uS19 (91 aa).

This sequence belongs to the universal ribosomal protein uS19 family.

Its function is as follows. Protein S19 forms a complex with S13 that binds strongly to the 16S ribosomal RNA. This is Small ribosomal subunit protein uS19 from Exiguobacterium sp. (strain ATCC BAA-1283 / AT1b).